The sequence spans 236 residues: Small ribosomal subunit protein uS2c (236 aa).

This sequence belongs to the universal ribosomal protein uS2 family.

Its subcellular location is the plastid. It localises to the chloroplast. This is Small ribosomal subunit protein uS2c (rps2) from Cucumis sativus (Cucumber).